Consider the following 656-residue polypeptide: Hemocyanin subunit A (656 aa).

The N-terminal stretch at Met1–Ala18 is a signal peptide. Residues His197, His201, and His227 each contribute to the Cu cation site. Asn313 carries N-linked (GlcNAc...) asparagine glycosylation. Positions 348, 352, and 388 each coordinate Cu cation. A disulfide bond links Cys558 and Cys606.

This sequence belongs to the tyrosinase family. Hemocyanin subfamily. In terms of assembly, 36-chain polymer consisting of 6 hexamers, each of which includes 4 different chains, A, B, C and D. In terms of tissue distribution, hemolymph.

The protein localises to the secreted. The protein resides in the extracellular space. Hemocyanins are copper-containing oxygen carriers occurring freely dissolved in the hemolymph of many mollusks and arthropods. In Scutigera coleoptrata (House centipede), this protein is Hemocyanin subunit A (HCA).